The chain runs to 327 residues: Toluene-4-monooxygenase system, hydroxylase component subunit beta (327 aa).

It belongs to the TmoE/XamoE family. The alkene monooxygenase multicomponent enzyme system is composed of an electron transfer component and a monooxygenase component interacting with the effector protein TmoD. The electron transfer component is composed of a ferredoxin reductase (TmoF) and a ferredoxin (TmoC), and the monooxygenase component is formed by a heterohexamer (dimer of heterotrimers) of two alpha subunits (TmoA), two beta subunits (TmoE) and two gamma subunits (TmoB).

The catalysed reaction is toluene + NADH + O2 + H(+) = 4-methylphenol + NAD(+) + H2O. It participates in xenobiotic degradation; toluene degradation. With respect to regulation, inhibited by Zn(2+) and Cu(2+). Functionally, component of the toluene-4-monooxygenase multicomponent enzyme system which catalyzes the O2- and NADH-dependent hydroxylation of toluene to form p-cresol. Also able to convert benzene to phenol, catechol, and 1,2,3-trihydroxybenzene by successive hydroxylations. The polypeptide is Toluene-4-monooxygenase system, hydroxylase component subunit beta (Ectopseudomonas mendocina (Pseudomonas mendocina)).